A 305-amino-acid chain; its full sequence is GMP synthase [glutamine-hydrolyzing] subunit B (305 aa).

Residues 2 to 184 form the GMPS ATP-PPase domain; that stretch reads VNTERFIQQA…LGLPREIQHR (183 aa). Residue 29–35 coordinates ATP; the sequence is SGGVDSS.

As to quaternary structure, heterodimer composed of a glutamine amidotransferase subunit (A) and a GMP-binding subunit (B).

It catalyses the reaction XMP + L-glutamine + ATP + H2O = GMP + L-glutamate + AMP + diphosphate + 2 H(+). It functions in the pathway purine metabolism; GMP biosynthesis; GMP from XMP (L-Gln route): step 1/1. Catalyzes the synthesis of GMP from XMP. In Methanosphaerula palustris (strain ATCC BAA-1556 / DSM 19958 / E1-9c), this protein is GMP synthase [glutamine-hydrolyzing] subunit B.